Here is a 360-residue protein sequence, read N- to C-terminus: Galactoside alpha-(1,2)-fucosyltransferase 1 (360 aa).

Topologically, residues 1 to 8 (MWAPGHHH) are cytoplasmic. The helical; Signal-anchor for type II membrane protein transmembrane segment at 9 to 27 (LCLIFLLTCVFACVFFLLI) threads the bilayer. Residues 28–360 (HQNLFHSGLD…GINADLSPLQ (333 aa)) lie on the Lumenal side of the membrane. Residues Asn-65, Asn-301, and Asn-327 are each glycosylated (N-linked (GlcNAc...) asparagine).

The protein belongs to the glycosyltransferase 11 family. Expressed in brain, intestine and kidney.

It is found in the golgi apparatus. The protein resides in the golgi stack membrane. The enzyme catalyses a ganglioside GM1 + GDP-beta-L-fucose = a ganglioside Fuc-GM1 + GDP + H(+). It catalyses the reaction a beta-D-galactosyl-(1-&gt;4)-N-acetyl-beta-D-glucosaminyl derivative + GDP-beta-L-fucose = an alpha-L-Fuc-(1-&gt;2)-beta-D-Gal-(1-&gt;4)-beta-D-GlcNAc derivative + GDP + H(+). It carries out the reaction a ganglioside GA1 + GDP-beta-L-fucose = a ganglioside Fuc-GA1 + GDP + H(+). The catalysed reaction is a beta-D-Gal-(1-&gt;3)-beta-D-GlcNAc-(1-&gt;3)-beta-D-Gal-(1-&gt;4)-beta-D-Glc-(1&lt;-&gt;1')-Cer(d18:1(4E)) + GDP-beta-L-fucose = alpha-L-fucosyl-(1-&gt;2)- beta-D-galactosyl-(1-&gt;3)-N-acetyl-beta-D-glucosaminyl-(1-&gt;3)-beta-D-galactosyl-(1-&gt;4)-beta-D-glucosyl-(1&lt;-&gt;1')-N-acylsphing-4-enine + GDP + H(+). The enzyme catalyses a neolactoside nLc4Cer(d18:1(4E)) + GDP-beta-L-fucose = a neolactoside IV(2)-alpha-Fuc-nLc4Cer(d18:1(4E)) + GDP + H(+). It catalyses the reaction beta-D-galactosyl-(1-&gt;3)-N-acetyl-D-galactosamine + GDP-beta-L-fucose = alpha-L-fucosyl-(1-&gt;2)-beta-D-galactosyl-(1-&gt;3)-N-acetyl-D-galactosamine + GDP + H(+). Its pathway is protein modification; protein glycosylation. Functionally, catalyzes the transfer of L-fucose, from a guanosine diphosphate-beta-L-fucose, to the terminal galactose residue of glycoconjugates through an alpha(1,2) linkage leading to H antigen synthesis that is an intermediate substrate in the synthesis of ABO blood group antigens. H antigen is essential for maturation of the glomerular layer of the main olfactory bulb, in cell migration and early cell-cell contacts during tumor associated angiogenesis. Preferentially fucosylates soluble lactose and to a lesser extent, fucosylates glycolipids gangliosides GA1 and GM1a. The protein is Galactoside alpha-(1,2)-fucosyltransferase 1 of Bos taurus (Bovine).